Reading from the N-terminus, the 98-residue chain is Integration host factor subunit beta (98 aa).

This sequence belongs to the bacterial histone-like protein family. As to quaternary structure, heterodimer of an alpha and a beta chain.

This protein is one of the two subunits of integration host factor, a specific DNA-binding protein that functions in genetic recombination as well as in transcriptional and translational control. The sequence is that of Integration host factor subunit beta from Pseudomonas putida (strain GB-1).